The chain runs to 757 residues: Kin of IRRE-like protein 1 (757 aa).

The N-terminal stretch at 1–16 (MLSLLVWILTLSDTFS) is a signal peptide. At 17–499 (QGTQTRFSQE…REVLPVGIIA (483 aa)) the chain is on the extracellular side. Ig-like C2-type domains are found at residues 21–115 (TRFS…AKLT), 120–216 (PEDT…TSIE), 223–299 (PTVT…TNVS), 308–387 (PRIV…EVPL), and 392–488 (PPII…IQLE). Residues Cys-42 and Cys-100 are joined by a disulfide bond. Asn-46 and Asn-140 each carry an N-linked (GlcNAc...) asparagine glycan. 2 cysteine pairs are disulfide-bonded: Cys-143/Cys-200 and Cys-244/Cys-287. A glycan (N-linked (GlcNAc...) asparagine) is linked at Asn-297. A disulfide bridge links Cys-329 with Cys-371. A Cell attachment site motif is present at residues 405–407 (RGD). Residues Cys-413 and Cys-472 are joined by a disulfide bond. Residue Asn-471 is glycosylated (N-linked (GlcNAc...) asparagine). The chain crosses the membrane as a helical span at residues 500–520 (GATIGASILLIFFFIALVFFL). Residues 521–757 (YRRRKGSRKD…RFQQRMQTHV (237 aa)) lie on the Cytoplasmic side of the membrane. A Phosphoserine modification is found at Ser-574. 2 positions are modified to phosphotyrosine; by FYN: Tyr-605 and Tyr-606. 2 positions are modified to phosphotyrosine: Tyr-622 and Tyr-625. Residues 649 to 679 (QLNTYSRGPASDYGPEPTPPGPAAPAGTDTT) are disordered. The residue at position 724 (Tyr-724) is a Phosphotyrosine.

The protein belongs to the immunoglobulin superfamily. Interacts with TJP1/ZO-1 and with NPHS2/podocin (via the C-terminus). Interacts with NPHS1/nephrin (via the Ig-like domains); this interaction is dependent on KIRREL1 glycosylation. Homodimer (via the Ig-like domains). Interacts when tyrosine-phosphorylated with GRB2. Post-translationally, phosphorylation probably regulates the interaction with NSH2. Phosphorylated at Tyr-605 and Tyr-606 by FYN, leading to GRB2 binding. N-glycosylated. Abundantly expressed in kidney. Specifically expressed in podocytes of kidney glomeruli.

The protein resides in the cell membrane. Required for proper function of the glomerular filtration barrier. It is involved in the maintenance of a stable podocyte architecture with interdigitating foot processes connected by specialized cell-cell junctions, known as the slit diaphragm. It is a signaling protein that needs the presence of TEC kinases to fully trans-activate the transcription factor AP-1. The sequence is that of Kin of IRRE-like protein 1 from Homo sapiens (Human).